A 498-amino-acid polypeptide reads, in one-letter code: Zinc finger protein 682 (498 aa).

Residues 4-75 form the KRAB domain; the sequence is LTFRDVTIEF…KRHETIAKPP (72 aa). 10 C2H2-type zinc fingers span residues 173 to 195, 201 to 223, 229 to 251, 257 to 279, 285 to 307, 313 to 335, 341 to 363, 369 to 391, 397 to 419, and 425 to 447; these read FKCM…KIIH, CICE…KRIH, YKCE…KRIH, YKCE…KKIH, YTCE…KTIH, YKCK…ERTH, YKCE…KVIH, and YNCE…KKIH. The segment at 453-475 adopts a C2H2-type 11; degenerate zinc-finger fold; it reads YKCEECGKAFKRCSHLNEHKRVQ.

This sequence belongs to the krueppel C2H2-type zinc-finger protein family.

The protein localises to the nucleus. Functionally, may be involved in transcriptional regulation. This chain is Zinc finger protein 682 (ZNF682), found in Homo sapiens (Human).